The sequence spans 798 residues: Ubiquitin carboxyl-terminal hydrolase 10 (798 aa).

At Ala2 the chain carries N-acetylalanine. The segment at 2 to 100 (ALHSPQYIFG…ILGCTASKIT (99 aa)) is interaction with p53/TP53. The interval 6–21 (PQYIFGDFSPDEFNQF) is G3BP1-binding. A Phosphothreonine modification is found at Thr24. Position 42 is a phosphothreonine; by ATM (Thr42). A Phosphothreonine modification is found at Thr100. Disordered regions lie at residues 139–166 (GVSG…LKDG), 194–257 (AEFM…CFPA), and 307–337 (TESI…LPVS). Polar residues predominate over residues 205–219 (TPRTCNSPQNSTDSV). Phosphoserine occurs at positions 211 and 226. Positions 307–316 (TESIDLDPTK) are enriched in basic and acidic residues. Residue Ser321 is modified to Phosphoserine. Residues 328–337 (GSASGTLPVS) show a composition bias toward polar residues. Ser337 carries the phosphoserine; by ATM modification. Ser365 and Ser370 each carry phosphoserine. Positions 415–795 (RGLINKGNWC…TAYLLYYRRV (381 aa)) constitute a USP domain. The active-site Nucleophile is the Cys424. Ser547 is subject to Phosphoserine. A compositionally biased stretch (polar residues) spans 551–562 (EKLTISNGPKNH). Positions 551-594 (EKLTISNGPKNHSVNEEEQEEQGEGSEDEWEQVGPRNKTSVTRQ) are disordered. 2 positions are modified to phosphoserine: Ser563 and Ser576. Residues 566–581 (EEEQEEQGEGSEDEWE) are compositionally biased toward acidic residues. His749 acts as the Proton acceptor in catalysis.

This sequence belongs to the peptidase C19 family. USP10 subfamily. Found in a deubiquitination complex with TANK, USP10 and ZC3H12A; this complex inhibits genotoxic stress- or interleukin-1-beta (IL1B)-mediated NF-kappa-B activation by promoting IKBKG or TRAF6 deubiquitination. Interacts with IKBKG; this interaction increases in response to DNA damage. Interacts with TANK; this interaction increases in response to DNA damage. Interacts with TRAF6; this interaction increases in response to DNA damage. Interacts with ZC3H12A; this interaction increases in response to DNA damage. Interacts with G3BP1 (via NTF2 domain) and G3BP2 (via NTF2 domain); inhibiting stress granule formation. In terms of processing, phosphorylated by ATM following DNA damage, leading to stabilization and translocation it to the nucleus. Post-translationally, ubiquitinated. Deubiquitinated by USP13. As to expression, widely expressed.

Its subcellular location is the cytoplasm. It is found in the nucleus. It localises to the early endosome. The enzyme catalyses Thiol-dependent hydrolysis of ester, thioester, amide, peptide and isopeptide bonds formed by the C-terminal Gly of ubiquitin (a 76-residue protein attached to proteins as an intracellular targeting signal).. Specifically inhibited by spautin-1 (specific and potent autophagy inhibitor-1), a derivative of MBCQ that binds to USP10 and inhibits deubiquitinase activity. Regulated by PIK3C3/VPS34-containing complexes. Hydrolase that can remove conjugated ubiquitin from target proteins such as p53/TP53, RPS2/us5, RPS3/us3, RPS10/eS10, BECN1, SNX3 and CFTR. Acts as an essential regulator of p53/TP53 stability: in unstressed cells, specifically deubiquitinates p53/TP53 in the cytoplasm, leading to counteract MDM2 action and stabilize p53/TP53. Following DNA damage, translocates to the nucleus and deubiquitinates p53/TP53, leading to regulate the p53/TP53-dependent DNA damage response. Component of a regulatory loop that controls autophagy and p53/TP53 levels: mediates deubiquitination of BECN1, a key regulator of autophagy, leading to stabilize the PIK3C3/VPS34-containing complexes. In turn, PIK3C3/VPS34-containing complexes regulate USP10 stability, suggesting the existence of a regulatory system by which PIK3C3/VPS34-containing complexes regulate p53/TP53 protein levels via USP10 and USP13. Does not deubiquitinate MDM2. Plays a key role in 40S ribosome subunit recycling when a ribosome has stalled during translation: acts both by inhibiting formation of stress granules, which store stalled translation pre-initiation complexes, and mediating deubiquitination of 40S ribosome subunits. Acts as a negative regulator of stress granules formation by lowering G3BP1 and G3BP2 valence, thereby preventing G3BP1 and G3BP2 ability to undergo liquid-liquid phase separation (LLPS) and assembly of stress granules. Promotes 40S ribosome subunit recycling following ribosome dissociation in response to ribosome stalling by mediating deubiquitination of 40S ribosomal proteins RPS2/us5, RPS3/us3 and RPS10/eS10, thereby preventing their degradation by the proteasome. Part of a ribosome quality control that takes place when ribosomes have stalled during translation initiation (iRQC): USP10 acts by removing monoubiquitination of RPS2/us5 and RPS3/us3, promoting 40S ribosomal subunit recycling. Deubiquitinates CFTR in early endosomes, enhancing its endocytic recycling. Involved in a TANK-dependent negative feedback response to attenuate NF-kappa-B activation via deubiquitinating IKBKG or TRAF6 in response to interleukin-1-beta (IL1B) stimulation or upon DNA damage. Deubiquitinates TBX21 leading to its stabilization. Plays a negative role in the RLR signaling pathway upon RNA virus infection by blocking the RIGI-mediated MAVS activation. Mechanistically, removes the unanchored 'Lys-63'-linked polyubiquitin chains of MAVS to inhibit its aggregation, essential for its activation. This is Ubiquitin carboxyl-terminal hydrolase 10 from Homo sapiens (Human).